The following is a 496-amino-acid chain: MVLAQLGGSISRALQQMSNATIIDEKVLNECLNEITRALLQADVQFKLVRDMSTNIKKIVNLEDLAAGHNKRRIIQQAVYNELCKILDPGKPAFTLKKGKPSVVMFVGLQGSGKTTTCTKYAYHHQKRGWKPALVCADTFRAGAFDQLKQNATKAKIPFYGSSYTESDPVKIAVDGVETFKKENCDLIIVDTSGRHKQEAALFEEMRQVSEAQKPDLVIFVMDSSIGQAAFDQAQAFRQSVAVGAVIVTKMDGHAKGGGALSRVAATKSPVIFIGTGEHMDEFEVFDVKPFVSRLLGMGDLSGLVNKIQDVVPMDQQPELLQKLSEGHFTLRIMYEQFQSMLKMGPLGVFSMLPGFSAEMMPQGREKESQAKFKRYMTMMDSMTDEELDSTNPKILTESRIMRIARGSGRLVHEVMEMLEEYKRLAKIFSKMKGLKIPKKGDMSSLSRNMNAQNMSKVLPPQMLKQIGGMGGLQNLMKQMGSAKDMMGMFGGGGGE.

Residues 1–296 (MVLAQLGGSI…DVKPFVSRLL (296 aa)) are G-domain. Residues 108–115 (GLQGSGKT), 191–195 (DTSGR), and 249–252 (TKMD) each bind GTP. The interval 297–496 (GMGDLSGLVN…MGMFGGGGGE (200 aa)) is M-domain.

It belongs to the GTP-binding SRP family. SRP54 subfamily. In terms of assembly, component of a signal recognition particle (SRP) complex that consists of a 7SL RNA molecule of 300 nucleotides and six protein subunits: SRP72, SRP68, SRP54, SRP19, SRP14 and SRP9.

It localises to the cytoplasm. The protein resides in the endoplasmic reticulum. The enzyme catalyses GTP + H2O = GDP + phosphate + H(+). Its function is as follows. Component of the signal recognition particle (SRP) complex, a ribonucleoprotein complex that mediates the cotranslational targeting of secretory and membrane proteins to the endoplasmic reticulum (ER). As part of the SRP complex, associates with the SRP receptor (SR) component SRPRA to target secretory proteins to the endoplasmic reticulum membrane. Binds to the signal sequence of presecretory proteins when they emerge from the ribosomes. Displays basal GTPase activity, and stimulates reciprocal GTPase activation of the SR subunit SRPRA. Forms a guanosine 5'-triphosphate (GTP)-dependent complex with the SR subunit SRPRA. SR compaction and GTPase mediated rearrangement of SR drive SRP-mediated cotranslational protein translocation into the ER. Requires the presence of SRP9/SRP14 and/or SRP19 to stably interact with RNA. The protein is Signal recognition particle subunit SRP54 1 of Solanum lycopersicum (Tomato).